The chain runs to 311 residues: Probable deoxyhypusine synthase (311 aa).

The active-site Nucleophile is the Lys-284.

It belongs to the deoxyhypusine synthase family. Requires NAD(+) as cofactor.

The enzyme catalyses [eIF5A protein]-L-lysine + spermidine = [eIF5A protein]-deoxyhypusine + propane-1,3-diamine. The protein operates within protein modification; eIF5A hypusination. Its function is as follows. Catalyzes the NAD-dependent oxidative cleavage of spermidine and the subsequent transfer of the butylamine moiety of spermidine to the epsilon-amino group of a specific lysine residue of the eIF-5A precursor protein to form the intermediate deoxyhypusine residue. The protein is Probable deoxyhypusine synthase of Picrophilus torridus (strain ATCC 700027 / DSM 9790 / JCM 10055 / NBRC 100828 / KAW 2/3).